Consider the following 31-residue polypeptide: Mycofactocin precursor peptide (31 aa).

The protein belongs to the mycofactocin precursor peptide family. Post-translationally, the post-translational modifications that lead to mycofactocin involve oxidative decarboxylation of the C-terminal tyrosine residue catalyzed by MftC, introduction of a tyramine-valine cross-link, removal of the modified C-terminal dipeptide by MftE. The released dipeptide then undergoes oxidative deamination by MftD, glycosylation by MftF and methylation by an unknown enzyme.

Functionally, precursor peptide that leads to mycofactocin (MFT) after extensive post-translational modifications by enzymes encoded by adjacent genes. Mycofactocin acts as a redox cofactor of nicotinamide-dependent oxidoreductases encoded in the same locus. Is required for the in vivo ethanol assimilation in M.smegmatis. This is Mycofactocin precursor peptide from Mycolicibacterium smegmatis (strain ATCC 700084 / mc(2)155) (Mycobacterium smegmatis).